The chain runs to 271 residues: MWELRSIAFSRAVLAEFLATLLFVFFGLGSALQWASSPPSVLQIAVAFGLGIGILVQALGHVSGAHINPAVTVACLVGCHVSFLRAAFYVAAQLLGAVAGAAILHEITPVEIRGDLAVNALHNNATAGQAVTVELFLTMQLVLCIFASTDERRGDNLGSPALSIGFSVTLGHLLGIYFTGCSMNPARSLAPAVVTGKFDDHWVFWIGPLVGAIIGSLLYNYLLFPSAKSLQERLAVLKGLEPDTDWEEREVRRRQSVELHSPQSLPRGSKA.

Topologically, residues 1-11 (MWELRSIAFSR) are cytoplasmic. Residues 12–32 (AVLAEFLATLLFVFFGLGSAL) form a helical membrane-spanning segment. Over 33-40 (QWASSPPS) the chain is Extracellular. A helical transmembrane segment spans residues 41–59 (VLQIAVAFGLGIGILVQAL). Over 60 to 64 (GHVSG) the chain is Cytoplasmic. An intramembrane region (discontinuously helical) is located at residues 65 to 74 (AHINPAVTVA). Residues 68 to 70 (NPA) carry the NPA 1 motif. The Cytoplasmic portion of the chain corresponds to 75–85 (CLVGCHVSFLR). A helical membrane pass occupies residues 86–107 (AAFYVAAQLLGAVAGAAILHEI). The Extracellular segment spans residues 108–127 (TPVEIRGDLAVNALHNNATA). N-linked (GlcNAc...) asparagine glycosylation occurs at N124. Residues 128–148 (GQAVTVELFLTMQLVLCIFAS) form a helical membrane-spanning segment. The Cytoplasmic portion of the chain corresponds to 149-156 (TDERRGDN). Residues 157-176 (LGSPALSIGFSVTLGHLLGI) traverse the membrane as a helical segment. Residues 177-180 (YFTG) lie on the Extracellular side of the membrane. The discontinuously helical intramembrane region spans 181–193 (CSMNPARSLAPAV). The NPA 2 signature appears at 184–186 (NPA). The Extracellular portion of the chain corresponds to 194 to 201 (VTGKFDDH). Residues 202–222 (WVFWIGPLVGAIIGSLLYNYL) traverse the membrane as a helical segment. Topologically, residues 223–271 (LFPSAKSLQERLAVLKGLEPDTDWEEREVRRRQSVELHSPQSLPRGSKA) are cytoplasmic. Residues 251-271 (VRRRQSVELHSPQSLPRGSKA) are disordered. 4 positions are modified to phosphoserine: S256, S261, S264, and S269. Positions 261-271 (SPQSLPRGSKA) are enriched in polar residues.

The protein belongs to the MIP/aquaporin (TC 1.A.8) family. Homotetramer. Ser-256 phosphorylation is necessary and sufficient for expression at the apical membrane. Endocytosis is not phosphorylation-dependent. In terms of processing, N-glycosylated. As to expression, detected in kidney, in cortical and the medullary collecting tubules (at protein level). Detected in kidney medulla and cortex.

The protein localises to the apical cell membrane. Its subcellular location is the basolateral cell membrane. It localises to the cell membrane. It is found in the cytoplasmic vesicle membrane. The protein resides in the golgi apparatus. The protein localises to the trans-Golgi network membrane. The catalysed reaction is H2O(in) = H2O(out). It catalyses the reaction glycerol(in) = glycerol(out). In terms of biological role, forms a water-specific channel that provides the plasma membranes of renal collecting duct with high permeability to water, thereby permitting water to move in the direction of an osmotic gradient. Plays an essential role in renal water homeostasis. Could also be permeable to glycerol. The protein is Aquaporin-2 of Rattus norvegicus (Rat).